A 167-amino-acid polypeptide reads, in one-letter code: Probable chemoreceptor glutamine deamidase CheD (167 aa).

Belongs to the CheD family.

It carries out the reaction L-glutaminyl-[protein] + H2O = L-glutamyl-[protein] + NH4(+). Its function is as follows. Probably deamidates glutamine residues to glutamate on methyl-accepting chemotaxis receptors (MCPs), playing an important role in chemotaxis. This chain is Probable chemoreceptor glutamine deamidase CheD, found in Natronomonas pharaonis (strain ATCC 35678 / DSM 2160 / CIP 103997 / JCM 8858 / NBRC 14720 / NCIMB 2260 / Gabara) (Halobacterium pharaonis).